A 252-amino-acid polypeptide reads, in one-letter code: tRNA-cytidine(32) 2-sulfurtransferase (252 aa).

The PP-loop motif signature appears at 37 to 42 (SGGKDS). Cysteine 112, cysteine 115, and cysteine 202 together coordinate [4Fe-4S] cluster.

It belongs to the TtcA family. In terms of assembly, homodimer. Mg(2+) serves as cofactor. [4Fe-4S] cluster is required as a cofactor.

It is found in the cytoplasm. The enzyme catalyses cytidine(32) in tRNA + S-sulfanyl-L-cysteinyl-[cysteine desulfurase] + AH2 + ATP = 2-thiocytidine(32) in tRNA + L-cysteinyl-[cysteine desulfurase] + A + AMP + diphosphate + H(+). It functions in the pathway tRNA modification. In terms of biological role, catalyzes the ATP-dependent 2-thiolation of cytidine in position 32 of tRNA, to form 2-thiocytidine (s(2)C32). The sulfur atoms are provided by the cysteine/cysteine desulfurase (IscS) system. This Geotalea uraniireducens (strain Rf4) (Geobacter uraniireducens) protein is tRNA-cytidine(32) 2-sulfurtransferase.